The sequence spans 462 residues: beta-Tubulin at 65B (462 aa).

The GTP site is built by Glu-70, Ser-137, Gly-141, Thr-142, Gly-143, Asn-203, and Asn-225. Residue Glu-70 participates in Mg(2+) binding. A disordered region spans residues 420–462 (DYRSSAEGEDSGGGGGGGGGRSGSAESGEEEATPEAHCQYCTE). The segment covering 430 to 441 (SGGGGGGGGGRS) has biased composition (gly residues).

This sequence belongs to the tubulin family. Dimer of alpha and beta chains. A typical microtubule is a hollow water-filled tube with an outer diameter of 25 nm and an inner diameter of 15 nM. Alpha-beta heterodimers associate head-to-tail to form protofilaments running lengthwise along the microtubule wall with the beta-tubulin subunit facing the microtubule plus end conferring a structural polarity. Microtubules usually have 13 protofilaments but different protofilament numbers can be found in some organisms and specialized cells. Mg(2+) serves as cofactor.

It is found in the cytoplasm. It localises to the cytoskeleton. In terms of biological role, tubulin is the major constituent of microtubules, a cylinder consisting of laterally associated linear protofilaments composed of alpha- and beta-tubulin heterodimers. Microtubules grow by the addition of GTP-tubulin dimers to the microtubule end, where a stabilizing cap forms. Below the cap, tubulin dimers are in GDP-bound state, owing to GTPase activity of alpha-tubulin. This chain is beta-Tubulin at 65B, found in Drosophila melanogaster (Fruit fly).